A 401-amino-acid chain; its full sequence is Argininosuccinate synthase (401 aa).

Position 8–16 (8–16 (AYSGGLDTS)) interacts with ATP. Tyr-87 is an L-citrulline binding site. Gly-117 lines the ATP pocket. L-aspartate is bound by residues Thr-119, Asn-123, and Asp-124. Asn-123 is a binding site for L-citrulline. L-citrulline contacts are provided by Arg-127, Ser-175, Glu-259, and Tyr-271.

Belongs to the argininosuccinate synthase family. Type 1 subfamily. Homotetramer.

The protein localises to the cytoplasm. The enzyme catalyses L-citrulline + L-aspartate + ATP = 2-(N(omega)-L-arginino)succinate + AMP + diphosphate + H(+). It participates in amino-acid biosynthesis; L-arginine biosynthesis; L-arginine from L-ornithine and carbamoyl phosphate: step 2/3. This chain is Argininosuccinate synthase, found in Pseudarthrobacter chlorophenolicus (strain ATCC 700700 / DSM 12829 / CIP 107037 / JCM 12360 / KCTC 9906 / NCIMB 13794 / A6) (Arthrobacter chlorophenolicus).